Here is a 557-residue protein sequence, read N- to C-terminus: Formate--tetrahydrofolate ligase (557 aa).

65-72 lines the ATP pocket; sequence TPAGEGKT.

This sequence belongs to the formate--tetrahydrofolate ligase family.

It carries out the reaction (6S)-5,6,7,8-tetrahydrofolate + formate + ATP = (6R)-10-formyltetrahydrofolate + ADP + phosphate. It participates in one-carbon metabolism; tetrahydrofolate interconversion. The protein is Formate--tetrahydrofolate ligase of Methylorubrum extorquens (strain PA1) (Methylobacterium extorquens).